Consider the following 570-residue polypeptide: Periplasmic trehalase (570 aa).

The signal sequence occupies residues methionine 1–alanine 34. Substrate contacts are provided by residues arginine 159, tryptophan 166–aspartate 167, asparagine 203, arginine 212–glutamine 214, arginine 284–glutamate 286, and glycine 317. Active-site proton donor/acceptor residues include aspartate 319 and glutamate 503. Glutamate 518 contributes to the substrate binding site. The tract at residues lysine 544–glutamine 570 is disordered. Residues proline 554–glutamine 570 show a composition bias toward low complexity.

Belongs to the glycosyl hydrolase 37 family. Monomer.

It localises to the periplasm. The enzyme catalyses alpha,alpha-trehalose + H2O = alpha-D-glucose + beta-D-glucose. In terms of biological role, provides the cells with the ability to utilize trehalose at high osmolarity by splitting it into glucose molecules that can subsequently be taken up by the phosphotransferase-mediated uptake system. In Salmonella paratyphi A (strain AKU_12601), this protein is Periplasmic trehalase.